Reading from the N-terminus, the 54-residue chain is Large ribosomal subunit protein bL33A (54 aa).

The protein belongs to the bacterial ribosomal protein bL33 family.

This is Large ribosomal subunit protein bL33A from Streptomyces avermitilis (strain ATCC 31267 / DSM 46492 / JCM 5070 / NBRC 14893 / NCIMB 12804 / NRRL 8165 / MA-4680).